Here is a 395-residue protein sequence, read N- to C-terminus: MPLRSTFTRFFQLEAASGLLLIAAAILALIINNSPLSWLYNGLLDTPVVAQIGALKIAKPLLLWINDGLMALFFLLIGLEVKREVLDGQLSKPSQIVLPGAAAIGGMLVPALIYWFLNRDNPAALDGWAIPTATDIAFALGVLALLGKRVPVSLKLFLMTLAIIDDLGAIVIIAIFYSGELSTLSLGLAAACIAALVAMNRLGVVKLGPYMIIGLILWVCVLKSGVHATLAGVTLAFCIPLRTKNAEPSPLLTLEHALHPWVAYGILPLFAFANAGLSLSGVTVESFTHHVPMGIAVGLLLGKTLGVFGLTWLAVKTGIAALPQGANWGQVLGVAILCGIGFTMSLFVGSLAFVPGASEYAGMDRMGILTGSVFAALIGYAVTAAASRKNTALPS.

Transmembrane regions (helical) follow at residues Phe11–Ile31, Leu61–Val81, Ile96–Phe116, Gly127–Gly147, Leu156–Phe176, Gly179–Met199, Leu215–Phe237, Val262–Val282, Ile295–Val315, Val334–Val354, and Met366–Ala386.

It belongs to the NhaA Na(+)/H(+) (TC 2.A.33) antiporter family.

It localises to the cell inner membrane. It carries out the reaction Na(+)(in) + 2 H(+)(out) = Na(+)(out) + 2 H(+)(in). Its function is as follows. Na(+)/H(+) antiporter that extrudes sodium in exchange for external protons. This Pseudomonas fluorescens (strain Pf0-1) protein is Na(+)/H(+) antiporter NhaA.